A 579-amino-acid chain; its full sequence is Vitamin B6 transporter TPN1 (579 aa).

A run of 12 helical transmembrane segments spans residues 99–119 (TGGL…GLSF), 123–143 (LASS…CSIM), 158–178 (LFGW…VMGW), 199–219 (PLWV…IFGI), 222–242 (VIKV…LLYI), 275–295 (LCYS…ILFP), 303–323 (IFCL…ILGL), 363–383 (VVVL…SAAF), 395–415 (IPRW…ALIG), 422–442 (ILGN…ILLF), 520–540 (FAFI…YWIG), and 546–566 (FGEY…GVVY).

It belongs to the purine-cytosine permease (2.A.39) family.

The protein localises to the membrane. In terms of biological role, thiamine-regulated, high affinity import carrier of pyridoxine, pyridoxal and pyridoxamine. The polypeptide is Vitamin B6 transporter TPN1 (TPN1) (Saccharomyces cerevisiae (Baker's yeast)).